A 313-amino-acid polypeptide reads, in one-letter code: Protoheme IX farnesyltransferase (313 aa).

The next 8 membrane-spanning stretches (helical) occupy residues 32 to 52 (VMSL…GDFH), 53 to 73 (PVLA…AGAL), 120 to 140 (ILVN…YVVI), 153 to 173 (IVIG…AVTG), 180 to 200 (LLLF…LALF), 226 to 246 (ILLY…LGYF), 248 to 268 (AIYG…ALRV), and 284 to 304 (LFKF…LEVV).

The protein belongs to the UbiA prenyltransferase family. Protoheme IX farnesyltransferase subfamily.

It localises to the cell inner membrane. The enzyme catalyses heme b + (2E,6E)-farnesyl diphosphate + H2O = Fe(II)-heme o + diphosphate. Its pathway is porphyrin-containing compound metabolism; heme O biosynthesis; heme O from protoheme: step 1/1. Converts heme B (protoheme IX) to heme O by substitution of the vinyl group on carbon 2 of heme B porphyrin ring with a hydroxyethyl farnesyl side group. The polypeptide is Protoheme IX farnesyltransferase (Rhodopseudomonas palustris (strain HaA2)).